An 82-amino-acid chain; its full sequence is Small ribosomal subunit protein uS12 (82 aa).

At Asp59 the chain carries 3-methylthioaspartic acid.

It belongs to the universal ribosomal protein uS12 family. Part of the 30S ribosomal subunit. Contacts proteins S8 and S17. May interact with IF1 in the 30S initiation complex.

Functionally, with S4 and S5 plays an important role in translational accuracy. Its function is as follows. Interacts with and stabilizes bases of the 16S rRNA that are involved in tRNA selection in the A site and with the mRNA backbone. Located at the interface of the 30S and 50S subunits, it traverses the body of the 30S subunit contacting proteins on the other side and probably holding the rRNA structure together. The combined cluster of proteins S8, S12 and S17 appears to hold together the shoulder and platform of the 30S subunit. The chain is Small ribosomal subunit protein uS12 (rpsL) from Actinobacillus pleuropneumoniae (Haemophilus pleuropneumoniae).